The primary structure comprises 165 residues: Methylated-DNA--protein-cysteine methyltransferase (165 aa).

Cys126 (nucleophile; methyl group acceptor) is an active-site residue.

Belongs to the MGMT family.

It is found in the cytoplasm. The catalysed reaction is a 6-O-methyl-2'-deoxyguanosine in DNA + L-cysteinyl-[protein] = S-methyl-L-cysteinyl-[protein] + a 2'-deoxyguanosine in DNA. It carries out the reaction a 4-O-methyl-thymidine in DNA + L-cysteinyl-[protein] = a thymidine in DNA + S-methyl-L-cysteinyl-[protein]. Functionally, involved in the cellular defense against the biological effects of O6-methylguanine (O6-MeG) and O4-methylthymine (O4-MeT) in DNA. Repairs the methylated nucleobase in DNA by stoichiometrically transferring the methyl group to a cysteine residue in the enzyme. This is a suicide reaction: the enzyme is irreversibly inactivated. The polypeptide is Methylated-DNA--protein-cysteine methyltransferase (Mycobacterium leprae (strain TN)).